The sequence spans 84 residues: MKANIHPDYHPVVFQDASTGTTFLTRSTVTSDRTALWSDGNTYPLVVVDVTSESHPFWTGAQRVMDTAGRVEKFERRYGVRKRP.

It belongs to the bacterial ribosomal protein bL31 family. Type B subfamily. As to quaternary structure, part of the 50S ribosomal subunit.

Binds the 23S rRNA. The chain is Large ribosomal subunit protein bL31B from Rhodococcus jostii (strain RHA1).